The following is a 354-amino-acid chain: uncharacterized protein (354 aa).

An N-terminal signal peptide occupies residues 1–21 (MFQKKTYAVFLILLLMMFTAA). Cysteine 22 carries N-palmitoyl cysteine lipidation. Cysteine 22 is lipidated: S-diacylglycerol cysteine.

The protein localises to the cell membrane. The protein resides in the membrane raft. This is an uncharacterized protein from Bacillus subtilis (strain 168).